A 951-amino-acid chain; its full sequence is Valine--tRNA ligase (951 aa).

Residues 42-52 carry the 'HIGH' region motif; that stretch reads PNVTGSLHMGH. The 'KMSKS' region motif lies at 554–558; sequence KMSKS. Position 557 (Lys-557) interacts with ATP. Residues 880–944 adopt a coiled-coil conformation; that stretch reads AGLINKEDEL…AEAKAKLIEQ (65 aa).

The protein belongs to the class-I aminoacyl-tRNA synthetase family. ValS type 1 subfamily. As to quaternary structure, monomer.

The protein localises to the cytoplasm. It carries out the reaction tRNA(Val) + L-valine + ATP = L-valyl-tRNA(Val) + AMP + diphosphate. Functionally, catalyzes the attachment of valine to tRNA(Val). As ValRS can inadvertently accommodate and process structurally similar amino acids such as threonine, to avoid such errors, it has a 'posttransfer' editing activity that hydrolyzes mischarged Thr-tRNA(Val) in a tRNA-dependent manner. The polypeptide is Valine--tRNA ligase (Salmonella paratyphi A (strain ATCC 9150 / SARB42)).